We begin with the raw amino-acid sequence, 202 residues long: Transmembrane 4 L6 family member 1 (202 aa).

Residues methionine 1–cysteine 9 are Cytoplasmic-facing. The chain crosses the membrane as a helical span at residues isoleucine 10–phenylalanine 30. Residues proline 31–phenylalanine 49 lie on the Extracellular side of the membrane. The chain crosses the membrane as a helical span at residues phenylalanine 50–leucine 70. The Cytoplasmic segment spans residues glutamate 71–serine 93. The chain crosses the membrane as a helical span at residues valine 94–glycine 114. Topologically, residues leucine 115–serine 161 are extracellular. N-linked (GlcNAc...) asparagine glycans are attached at residues asparagine 129 and asparagine 159. Residues leucine 162 to isoleucine 182 traverse the membrane as a helical segment. The Cytoplasmic portion of the chain corresponds to asparagine 183–cysteine 202.

It belongs to the L6 tetraspanin family. As to quaternary structure, present in high molecular weight complexes in tumor cells. Interacts with SDCBP2. In terms of tissue distribution, highly expressed in lung, breast, colon and ovarian carcinomas. It is also present on some normal cells, endothelial cells in particular.

It localises to the membrane. This is Transmembrane 4 L6 family member 1 (TM4SF1) from Homo sapiens (Human).